Here is a 427-residue protein sequence, read N- to C-terminus: Light-independent protochlorophyllide reductase subunit N (427 aa).

3 residues coordinate [4Fe-4S] cluster: cysteine 28, cysteine 53, and cysteine 114.

The protein belongs to the BchN/ChlN family. As to quaternary structure, protochlorophyllide reductase is composed of three subunits; BchL, BchN and BchB. Forms a heterotetramer of two BchB and two BchN subunits. [4Fe-4S] cluster serves as cofactor.

The enzyme catalyses chlorophyllide a + oxidized 2[4Fe-4S]-[ferredoxin] + 2 ADP + 2 phosphate = protochlorophyllide a + reduced 2[4Fe-4S]-[ferredoxin] + 2 ATP + 2 H2O. The protein operates within porphyrin-containing compound metabolism; bacteriochlorophyll biosynthesis (light-independent). In terms of biological role, component of the dark-operative protochlorophyllide reductase (DPOR) that uses Mg-ATP and reduced ferredoxin to reduce ring D of protochlorophyllide (Pchlide) to form chlorophyllide a (Chlide). This reaction is light-independent. The NB-protein (BchN-BchB) is the catalytic component of the complex. The protein is Light-independent protochlorophyllide reductase subunit N of Jannaschia sp. (strain CCS1).